We begin with the raw amino-acid sequence, 39 residues long: Large ribosomal subunit protein bL36 (39 aa).

It belongs to the bacterial ribosomal protein bL36 family.

The sequence is that of Large ribosomal subunit protein bL36 from Oenococcus oeni (strain ATCC BAA-331 / PSU-1).